The primary structure comprises 495 residues: Glucose-6-phosphate 1-dehydrogenase (495 aa).

An Isoglutamyl lysine isopeptide (Lys-Gln) (interchain with Q-Cter in protein Pup) cross-link involves residue K51. NADP(+) contacts are provided by residues 94–95 (DL) and K154. Substrate contacts are provided by H184, K188, E222, and D241. The active-site Proton acceptor is H246. K345 contacts substrate.

It belongs to the glucose-6-phosphate dehydrogenase family.

The enzyme catalyses D-glucose 6-phosphate + NADP(+) = 6-phospho-D-glucono-1,5-lactone + NADPH + H(+). The protein operates within carbohydrate degradation; pentose phosphate pathway; D-ribulose 5-phosphate from D-glucose 6-phosphate (oxidative stage): step 1/3. Functionally, catalyzes the oxidation of glucose 6-phosphate to 6-phosphogluconolactone. This is Glucose-6-phosphate 1-dehydrogenase from Mycolicibacterium smegmatis (strain ATCC 700084 / mc(2)155) (Mycobacterium smegmatis).